Consider the following 213-residue polypeptide: Cell division protein SepF 2 (213 aa).

The tract at residues 16–63 (EDDGYDGRGFDPDDDFEPELDPEPERDRRRHEPPHQSHQALHPQRDES) is disordered. Residues 27–39 (PDDDFEPELDPEP) are compositionally biased toward acidic residues.

This sequence belongs to the SepF family. Homodimer. Interacts with FtsZ.

It is found in the cytoplasm. Cell division protein that is part of the divisome complex and is recruited early to the Z-ring. Probably stimulates Z-ring formation, perhaps through the cross-linking of FtsZ protofilaments. Its function overlaps with FtsA. This chain is Cell division protein SepF 2, found in Streptomyces avermitilis (strain ATCC 31267 / DSM 46492 / JCM 5070 / NBRC 14893 / NCIMB 12804 / NRRL 8165 / MA-4680).